Reading from the N-terminus, the 94-residue chain is Small ribosomal subunit protein uS19 (94 aa).

Belongs to the universal ribosomal protein uS19 family.

Its function is as follows. Protein S19 forms a complex with S13 that binds strongly to the 16S ribosomal RNA. This is Small ribosomal subunit protein uS19 from Dictyoglomus turgidum (strain DSM 6724 / Z-1310).